Here is a 903-residue protein sequence, read N- to C-terminus: HTH-type transcriptional regulator MalT (903 aa).

Residue 39–46 (CPAGYGKT) participates in ATP binding. One can recognise an HTH luxR-type domain in the interval 832–897 (ELIRTSPLTQ…EAVQQAQRLL (66 aa)). Residues 856-875 (NDQIANELDVAATTIKTHIR) constitute a DNA-binding region (H-T-H motif).

This sequence belongs to the MalT family. Monomer in solution. Oligomerizes to an active state in the presence of the positive effectors ATP and maltotriose.

Activated by ATP and maltotriose, which are both required for DNA binding. Functionally, positively regulates the transcription of the maltose regulon whose gene products are responsible for uptake and catabolism of malto-oligosaccharides. Specifically binds to the promoter region of its target genes, recognizing a short DNA motif called the MalT box. In Yersinia pseudotuberculosis serotype O:1b (strain IP 31758), this protein is HTH-type transcriptional regulator MalT.